The sequence spans 473 residues: Photosystem II CP43 reaction center protein (473 aa).

A propeptide spanning residues M1–E14 is cleaved from the precursor. T15 is modified (N-acetylthreonine). Phosphothreonine is present on T15. 5 consecutive transmembrane segments (helical) span residues L69–A93, L134–N155, K178–T200, K255–S275, and W291–A312. E367 is a binding site for [CaMn4O5] cluster. The helical transmembrane segment at R447–P471 threads the bilayer.

The protein belongs to the PsbB/PsbC family. PsbC subfamily. In terms of assembly, PSII is composed of 1 copy each of membrane proteins PsbA, PsbB, PsbC, PsbD, PsbE, PsbF, PsbH, PsbI, PsbJ, PsbK, PsbL, PsbM, PsbT, PsbX, PsbY, PsbZ, Psb30/Ycf12, at least 3 peripheral proteins of the oxygen-evolving complex and a large number of cofactors. It forms dimeric complexes. It depends on Binds multiple chlorophylls and provides some of the ligands for the Ca-4Mn-5O cluster of the oxygen-evolving complex. It may also provide a ligand for a Cl- that is required for oxygen evolution. PSII binds additional chlorophylls, carotenoids and specific lipids. as a cofactor.

It is found in the plastid. It localises to the chloroplast thylakoid membrane. One of the components of the core complex of photosystem II (PSII). It binds chlorophyll and helps catalyze the primary light-induced photochemical processes of PSII. PSII is a light-driven water:plastoquinone oxidoreductase, using light energy to abstract electrons from H(2)O, generating O(2) and a proton gradient subsequently used for ATP formation. In Liriodendron tulipifera (Tuliptree), this protein is Photosystem II CP43 reaction center protein.